Reading from the N-terminus, the 148-residue chain is Transcription antitermination protein NusB (148 aa).

It belongs to the NusB family.

Involved in transcription antitermination. Required for transcription of ribosomal RNA (rRNA) genes. Binds specifically to the boxA antiterminator sequence of the ribosomal RNA (rrn) operons. This chain is Transcription antitermination protein NusB, found in Saccharopolyspora erythraea (strain ATCC 11635 / DSM 40517 / JCM 4748 / NBRC 13426 / NCIMB 8594 / NRRL 2338).